A 108-amino-acid chain; its full sequence is Urease subunit beta (108 aa).

It belongs to the urease beta subunit family. In terms of assembly, heterotrimer of UreA (gamma), UreB (beta) and UreC (alpha) subunits. Three heterotrimers associate to form the active enzyme.

It localises to the cytoplasm. The catalysed reaction is urea + 2 H2O + H(+) = hydrogencarbonate + 2 NH4(+). The protein operates within nitrogen metabolism; urea degradation; CO(2) and NH(3) from urea (urease route): step 1/1. This is Urease subunit beta from Trichormus variabilis (strain ATCC 29413 / PCC 7937) (Anabaena variabilis).